A 710-amino-acid polypeptide reads, in one-letter code: Probable thimet oligopeptidase (710 aa).

His-502 is a Zn(2+) binding site. Glu-503 is an active-site residue. Residue His-506 participates in Zn(2+) binding.

The protein belongs to the peptidase M3 family. It depends on Zn(2+) as a cofactor.

It localises to the cytoplasm. The catalysed reaction is Preferential cleavage of bonds with hydrophobic residues at P1, P2 and P3' and a small residue at P1' in substrates of 5 to 15 residues.. Its function is as follows. Involved in cytoplasmic peptide degradation. The protein is Probable thimet oligopeptidase of Arabidopsis thaliana (Mouse-ear cress).